We begin with the raw amino-acid sequence, 638 residues long: DEAD-box ATP-dependent RNA helicase 52B (638 aa).

Low complexity-rich tracts occupy residues Met-1–Ala-21 and Gly-40–Pro-67. Residues Met-1–Pro-129 form a disordered region. Residues Val-79–Ala-112 show a composition bias toward gly residues. A compositionally biased stretch (basic and acidic residues) spans Gly-119 to Asp-128. The Q motif signature appears at Asn-169–Arg-197. A Helicase ATP-binding domain is found at Ile-200 to Leu-384. Ala-213–Thr-220 serves as a coordination point for ATP. The DEAD box signature appears at Asp-328–Asp-331. Positions Tyr-411 to Ala-562 constitute a Helicase C-terminal domain. Residues Ser-565–Asp-638 form a disordered region. A compositionally biased stretch (gly residues) spans Phe-567–Phe-583. Residues Gly-584–Gly-593 are compositionally biased toward basic and acidic residues. Over residues Ser-594–Gly-632 the composition is skewed to gly residues.

It belongs to the DEAD box helicase family. DDX3/DED1 subfamily.

It catalyses the reaction ATP + H2O = ADP + phosphate + H(+). The protein is DEAD-box ATP-dependent RNA helicase 52B (PL10B) of Oryza sativa subsp. japonica (Rice).